The following is a 209-amino-acid chain: MSSQYSNVENLSPQTIRQVMRELQEMETTPPEGIKVLINESDVTDIQALIDGPAGTPYAAGIFRVKLTLNKDFPQTPPKAYFLTKIFHPNVAANGEICVNTLKKDWKPDLGIKHILLTIKCLLIVPNPESALNEEAGKMLLERYDDYSQRARMMTEIHAQPAKCAAGAAGDSKDDDGPSTKKHAGLDKKLQDKKKEKLLKEKKRMLKRL.

Residues 14 to 160 (QTIRQVMREL…ARMMTEIHAQ (147 aa)) enclose the UBC core domain. The active-site Glycyl thioester intermediate is the Cys98. A disordered region spans residues 164-209 (CAAGAAGDSKDDDGPSTKKHAGLDKKLQDKKKEKLLKEKKRMLKRL). Over residues 171–199 (DSKDDDGPSTKKHAGLDKKLQDKKKEKLL) the composition is skewed to basic and acidic residues. Basic residues predominate over residues 200–209 (KEKKRMLKRL).

Belongs to the ubiquitin-conjugating enzyme family.

It catalyses the reaction S-ubiquitinyl-[E1 ubiquitin-activating enzyme]-L-cysteine + [E2 ubiquitin-conjugating enzyme]-L-cysteine = [E1 ubiquitin-activating enzyme]-L-cysteine + S-ubiquitinyl-[E2 ubiquitin-conjugating enzyme]-L-cysteine.. The protein operates within protein modification; protein ubiquitination. In terms of biological role, catalyzes the covalent attachment of ubiquitin to other proteins. Acts as an essential factor of the anaphase promoting complex/cyclosome (APC/C), a cell cycle-regulated ubiquitin ligase that controls progression through mitosis. Acts by specifically elongating polyubiquitin chains initiated by the E2 enzyme vih/UbcH10 on APC/C substrates, enhancing the degradation of APC/C substrates by the proteasome and promoting mitotic exit. The sequence is that of Ubiquitin-conjugating enzyme E2 S from Drosophila ananassae (Fruit fly).